The following is a 437-amino-acid chain: Beta-1,3-galactosyl-O-glycosyl-glycoprotein beta-1,6-N-acetylglucosaminyltransferase 3 (437 aa).

At 1-12 (MTSWQRLCWHYR) the chain is on the cytoplasmic side. The chain crosses the membrane as a helical; Signal-anchor for type II membrane protein span at residues 13-30 (LWTLGCYMLLAILALKLS). Topologically, residues 31-437 (LRLKCDFDAM…RHKAIYGTEL (407 aa)) are lumenal. Intrachain disulfides connect Cys-70–Cys-227, Cys-161–Cys-381, Cys-182–Cys-209, and Cys-390–Cys-422. The N-linked (GlcNAc...) asparagine glycan is linked to Asn-288.

This sequence belongs to the glycosyltransferase 14 family. In terms of processing, N-glycosylated.

The protein resides in the golgi apparatus membrane. It catalyses the reaction a 3-O-[beta-D-galactosyl-(1-&gt;3)-N-acetyl-alpha-D-galactosaminyl]-L-seryl-[protein] + UDP-N-acetyl-alpha-D-glucosamine = 3-O-{beta-D-galactosyl-(1-&gt;3)-[N-acetyl-beta-D-glucosaminyl-(1-&gt;6)]-N-acetyl-alpha-D-galactosaminyl}-L-seryl-[protein] + UDP + H(+). The enzyme catalyses a 3-O-[beta-D-galactosyl-(1-&gt;3)-N-acetyl-alpha-D-galactosaminyl]-L-threonyl-[protein] + UDP-N-acetyl-alpha-D-glucosamine = a 3-O-{beta-D-galactosyl-(1-&gt;3)-[N-acetyl-beta-D-glucosaminyl-(1-&gt;6)]-N-acetyl-alpha-D-galactosaminyl}-L-threonyl-[protein] + UDP + H(+). It carries out the reaction a beta-D-Gal-(1-&gt;4)-beta-D-GlcNAc-(1-&gt;3)-beta-D-Gal-(1-&gt;4)-beta-D-GlcNAc derivative + UDP-N-acetyl-alpha-D-glucosamine = a beta-D-Gal-(1-&gt;4)-beta-D-GlcNAc-(1-&gt;3)-[beta-D-GlcNAc-(1-&gt;6)]-beta-D-Gal-(1-&gt;4)-N-acetyl-beta-D-glucosaminyl derivative + UDP + H(+). The catalysed reaction is 3-O-[N-acetyl-beta-D-glucosaminyl-(1-&gt;3)-N-acetyl-alpha-D-galactosaminyl]-L-seryl-[protein] + UDP-N-acetyl-alpha-D-glucosamine = 3-O-[N-acetyl-beta-D-glucosaminyl-(1-&gt;3)-[N-acetyl-beta-D-glucosaminyl-(1-&gt;6)]-N-acetyl-alpha-D-galactosaminyl]-L-seryl-[protein] + UDP + H(+). It catalyses the reaction a 3-O-[N-acetyl-beta-D-glucosaminyl-(1-&gt;3)-N-acetyl-alpha-D-galactosaminyl]-L-threonyl-[protein] + UDP-N-acetyl-alpha-D-glucosamine = 3-O-[N-acetyl-beta-D-glucosaminyl-(1-&gt;3)-[N-acetyl-beta-D-glucosaminyl-(1-&gt;6)]-N-acetyl-alpha-D-galactosaminyl]-L-threonyl-[protein] + UDP + H(+). It participates in protein modification; protein glycosylation. Functionally, glycosyltransferase that can synthesize all known mucin beta 6 N-acetylglucosaminides. Mediates core 2 and core 4 O-glycan branching, 2 important steps in mucin-type biosynthesis. Also has I-branching enzyme activity by converting linear into branched poly-N-acetyllactosaminoglycans, leading to introduce the blood group I antigen during embryonic development. This chain is Beta-1,3-galactosyl-O-glycosyl-glycoprotein beta-1,6-N-acetylglucosaminyltransferase 3 (Gcnt3), found in Mus musculus (Mouse).